Reading from the N-terminus, the 469-residue chain is Tryptophan biosynthesis protein TrpCF (469 aa).

Positions 1-271 are indole-3-glycerol phosphate synthase; sequence MSEQLSEHIS…LAVRKIVLGE (271 aa). An N-(5'-phosphoribosyl)anthranilate isomerase region spans residues 272–469; it reads HKVCGLTHPD…QQVFQQLRNY (198 aa).

This sequence in the N-terminal section; belongs to the TrpC family. The protein in the C-terminal section; belongs to the TrpF family. In terms of assembly, monomer.

The enzyme catalyses N-(5-phospho-beta-D-ribosyl)anthranilate = 1-(2-carboxyphenylamino)-1-deoxy-D-ribulose 5-phosphate. It carries out the reaction 1-(2-carboxyphenylamino)-1-deoxy-D-ribulose 5-phosphate + H(+) = (1S,2R)-1-C-(indol-3-yl)glycerol 3-phosphate + CO2 + H2O. It participates in amino-acid biosynthesis; L-tryptophan biosynthesis; L-tryptophan from chorismate: step 3/5. It functions in the pathway amino-acid biosynthesis; L-tryptophan biosynthesis; L-tryptophan from chorismate: step 4/5. Its function is as follows. Bifunctional enzyme that catalyzes two sequential steps of tryptophan biosynthetic pathway. The first reaction is catalyzed by the isomerase, coded by the TrpF domain; the second reaction is catalyzed by the synthase, coded by the TrpC domain. The polypeptide is Tryptophan biosynthesis protein TrpCF (trpCF) (Vibrio cholerae serotype O1 (strain ATCC 39315 / El Tor Inaba N16961)).